We begin with the raw amino-acid sequence, 631 residues long: Integrator complex subunit 10 (631 aa).

Residues 545 to 570 (FELTSSPNSSGTPTATTVAGGSQSRR) show a composition bias toward polar residues. The tract at residues 545–577 (FELTSSPNSSGTPTATTVAGGSQSRRIGTRGAD) is disordered.

The protein belongs to the Integrator subunit 10 family. As to quaternary structure, belongs to the multiprotein complex Integrator, at least composed of IntS1, IntS2, IntS3, IntS4, omd/IntS5, IntS6, defl/IntS7, IntS8, IntS9, IntS10, IntS11, IntS12, asun/IntS13, IntS14 and IntS15. The core complex associates with protein phosphatase 2A subunits mts/PP2A and Pp2A-29B, to form the Integrator-PP2A (INTAC) complex.

It localises to the nucleus. In terms of biological role, component of the integrator complex, a multiprotein complex that terminates RNA polymerase II (Pol II) transcription in the promoter-proximal region of genes. The integrator complex provides a quality checkpoint during transcription elongation by driving premature transcription termination of transcripts that are unfavorably configured for transcriptional elongation: the complex terminates transcription by (1) catalyzing dephosphorylation of the C-terminal domain (CTD) of Pol II subunit Polr2A/Rbp1 and Spt5, and (2) degrading the exiting nascent RNA transcript via endonuclease activity. The integrator complex is also involved in the 3'-end processing of the U7 snRNA, and also the spliceosomal snRNAs U1, U2, U4 and U5. This is Integrator complex subunit 10 from Drosophila melanogaster (Fruit fly).